Consider the following 355-residue polypeptide: MRIVDRESAEGRRERITLVPETLDDLWHLTYVLEPGDLVAGDTTRRIQRDDDKMRDTGGEREPMWIRIDVNNVEFAKFANRLRVGGDIVDCSREDQLGFHHTFNVEEHDELTVEKVWQVDQLERLEEAVEAAEQPDVAIATVEEGQAHIHTVAQYGVEERASITGTTGKGEYARSRDELFEELAAILRRLDAEAIILAGPGFTKQDALEHIEDNAPEAAEKIQVVDTASVGDRGVHEVLKRGAVDRIQTETRVSKEAELIDELMERIGEGEKAAYGVDEVAEAAEFGAIETLLILDERLREERAGEGDWAVDVNDIIENVEQQGGEVVVFSHEFDPGQQLANLGGIAALLRYRLS.

This sequence belongs to the eukaryotic release factor 1 family. Pelota subfamily. In terms of assembly, monomer. The cofactor is a divalent metal cation.

The protein localises to the cytoplasm. In terms of biological role, may function in recognizing stalled ribosomes, interact with stem-loop structures in stalled mRNA molecules, and effect endonucleolytic cleavage of the mRNA. May play a role in the release non-functional ribosomes and degradation of damaged mRNAs. Has endoribonuclease activity. In Natronomonas pharaonis (strain ATCC 35678 / DSM 2160 / CIP 103997 / JCM 8858 / NBRC 14720 / NCIMB 2260 / Gabara) (Halobacterium pharaonis), this protein is Protein pelota homolog.